The primary structure comprises 537 residues: MGCVQCKDKEATKLTDERETSVSQHAGYRYGSDPTPQHYPSFGVTAIPNYNNFHAPVSQGVTVFGGVNSSSHSGTLRSRGGTGVTLFVALYDYEARSEDDLSFRKGEKFQILNSTEGDWWEARSLTTGGTGYIPSNYVAPVDSIQAEDWYFGKLGRKDAERQLLSNGNPRGTFLIRESETTKGAYSLSIQDWDETKGDHVKHYKIRKLDNGGYYITTRAQFETLQQLVHHYSARAAGLCCRLIVPCHKGMPRLADLSVKTKDVWEIPRESLQLIKRLGNGQFGEVWMGTWNGNTKVAVKTLKPGTMSPESFLEEAQIMKKLRHDKLVQLYAVVSEEPIYIVTEYMSKGSLLDFLKDGEGRGLKLPNLVDMAAQVAAGMAYIERMNYIHRDLRSANILVGDSLVCKIADFGLARLIEDNEYTARQGAKFPIKWTAPEAALYGRFTIKSDVWSFGILLTELVTKGRVPYPGMNNREVLEQVERGYRMPCPQDCPSSLHELMLQCWKRDPEERPTFEYLQAFLEDYFTATEPQYQPGDNL.

Gly2 carries N-myristoyl glycine lipidation. S-palmitoyl cysteine attachment occurs at residues Cys3 and Cys6. Thr12 is modified (phosphothreonine; by PKC). Residues 13 to 34 (KLTDERETSVSQHAGYRYGSDP) form a disordered region. Residues 82–143 (TGVTLFVALY…PSNYVAPVDS (62 aa)) form the SH3 domain. The region spanning 149–246 (WYFGKLGRKD…GLCCRLIVPC (98 aa)) is the SH2 domain. The Protein kinase domain occupies 271-524 (LQLIKRLGNG…YLQAFLEDYF (254 aa)). ATP contacts are provided by residues 277–285 (LGNGQFGEV) and Lys299. The Proton acceptor role is filled by Asp390. Tyr420 is subject to Phosphotyrosine; by autocatalysis. Tyr531 is subject to Phosphotyrosine.

It belongs to the protein kinase superfamily. Tyr protein kinase family. SRC subfamily. Requires Mn(2+) as cofactor. As to expression, widely expressed.

The protein resides in the cytoplasm. It is found in the nucleus. It carries out the reaction L-tyrosyl-[protein] + ATP = O-phospho-L-tyrosyl-[protein] + ADP + H(+). With respect to regulation, inhibited by phosphorylation of Tyr-531 by leukocyte common antigen and activated by dephosphorylation of this site. Relatively inactive in the unfertilized oocyte, undergoes rapid activation immediately following fertilization. Total activity increases progressively during later development and remains elevated during sphere and epiboly stage. Functionally, tyrosine-protein kinase implicated in the control of cell growth. Plays a role in the regulation of intracellular calcium levels. Required in brain development and mature brain function with important roles in the regulation of axon growth, axon guidance, and neurite extension. Role in cntn1-mediated signaling. Required for convergent extension cell movements during gastrulation, acting with yes via rhoa. May be required for epiboly to occur, possibly through its effects in calcium signaling. This Danio rerio (Zebrafish) protein is Tyrosine-protein kinase fyna (fyna).